We begin with the raw amino-acid sequence, 313 residues long: Solute carrier family 25 member 36 (313 aa).

Solcar repeat units follow at residues 4–110 (RDTL…CKEK), 118–205 (DSTQ…IKRK), and 226–310 (SDFV…VVYL). The next 6 membrane-spanning stretches (helical) occupy residues 7 to 27 (LVHL…TCPL), 41 to 57 (LYIS…ASVN), 113 to 133 (NIFN…AGFT), 182 to 202 (MSAS…YESI), 228 to 248 (FVGM…IAYP), and 293 to 313 (QIPN…LLDG).

The protein belongs to the mitochondrial carrier (TC 2.A.29) family.

It localises to the mitochondrion inner membrane. Its function is as follows. Mitochondrial transporter that imports/exports pyrimidine nucleotides into and from mitochondria. Transports preferentially cytosine and uracil (deoxy)nucleoside mono-, di-, and triphosphates by uniport and antiport mechanism. The sequence is that of Solute carrier family 25 member 36 (SLC25A36) from Gallus gallus (Chicken).